Reading from the N-terminus, the 321-residue chain is Fibronectin type III domain-containing protein 8 (321 aa).

The Fibronectin type-III domain maps to 175 to 277 (VPEAPFVCEH…KPYKFATVAT (103 aa)).

The polypeptide is Fibronectin type III domain-containing protein 8 (FNDC8) (Bos taurus (Bovine)).